Consider the following 75-residue polypeptide: Cytochrome c oxidase subunit 6C (75 aa).

The Mitochondrial matrix segment spans residues 1 to 13 (MSSGALTKPQMRG). The chain crosses the membrane as a helical span at residues 14–54 (LLAKRLRFHIVGAFAVSLGVAAFYKFAVAEPRKKAYADFYR). The Mitochondrial intermembrane segment spans residues 55-75 (NYDSMKDFEEMRKAGIFQSAK).

This sequence belongs to the cytochrome c oxidase subunit 6c family. In terms of assembly, component of the cytochrome c oxidase (complex IV, CIV), a multisubunit enzyme composed of 14 subunits. The complex is composed of a catalytic core of 3 subunits MT-CO1, MT-CO2 and MT-CO3, encoded in the mitochondrial DNA, and 11 supernumerary subunits COX4I, COX5A, COX5B, COX6A, COX6B, COX6C, COX7A, COX7B, COX7C, COX8 and NDUFA4, which are encoded in the nuclear genome. The complex exists as a monomer or a dimer and forms supercomplexes (SCs) in the inner mitochondrial membrane with NADH-ubiquinone oxidoreductase (complex I, CI) and ubiquinol-cytochrome c oxidoreductase (cytochrome b-c1 complex, complex III, CIII), resulting in different assemblies (supercomplex SCI(1)III(2)IV(1) and megacomplex MCI(2)III(2)IV(2)).

It localises to the mitochondrion inner membrane. The protein operates within energy metabolism; oxidative phosphorylation. Its function is as follows. Component of the cytochrome c oxidase, the last enzyme in the mitochondrial electron transport chain which drives oxidative phosphorylation. The respiratory chain contains 3 multisubunit complexes succinate dehydrogenase (complex II, CII), ubiquinol-cytochrome c oxidoreductase (cytochrome b-c1 complex, complex III, CIII) and cytochrome c oxidase (complex IV, CIV), that cooperate to transfer electrons derived from NADH and succinate to molecular oxygen, creating an electrochemical gradient over the inner membrane that drives transmembrane transport and the ATP synthase. Cytochrome c oxidase is the component of the respiratory chain that catalyzes the reduction of oxygen to water. Electrons originating from reduced cytochrome c in the intermembrane space (IMS) are transferred via the dinuclear copper A center (CU(A)) of subunit 2 and heme A of subunit 1 to the active site in subunit 1, a binuclear center (BNC) formed by heme A3 and copper B (CU(B)). The BNC reduces molecular oxygen to 2 water molecules using 4 electrons from cytochrome c in the IMS and 4 protons from the mitochondrial matrix. The sequence is that of Cytochrome c oxidase subunit 6C (COX6C) from Carlito syrichta (Philippine tarsier).